The sequence spans 244 residues: Probable septum site-determining protein MinC (244 aa).

The protein belongs to the MinC family. As to quaternary structure, interacts with MinD and FtsZ.

Functionally, cell division inhibitor that blocks the formation of polar Z ring septums. Rapidly oscillates between the poles of the cell to destabilize FtsZ filaments that have formed before they mature into polar Z rings. Prevents FtsZ polymerization. This chain is Probable septum site-determining protein MinC, found in Dichelobacter nodosus (strain VCS1703A).